The chain runs to 219 residues: Ribose-5-phosphate isomerase A (219 aa).

Residues 28-31 (TGST), 81-84 (DGAD), and 94-97 (KGGG) contribute to the substrate site. Glutamate 103 acts as the Proton acceptor in catalysis. Lysine 121 lines the substrate pocket.

This sequence belongs to the ribose 5-phosphate isomerase family. As to quaternary structure, homodimer.

It catalyses the reaction aldehydo-D-ribose 5-phosphate = D-ribulose 5-phosphate. The protein operates within carbohydrate degradation; pentose phosphate pathway; D-ribose 5-phosphate from D-ribulose 5-phosphate (non-oxidative stage): step 1/1. Functionally, catalyzes the reversible conversion of ribose-5-phosphate to ribulose 5-phosphate. The polypeptide is Ribose-5-phosphate isomerase A (Edwardsiella ictaluri (strain 93-146)).